Here is a 242-residue protein sequence, read N- to C-terminus: Protein LST7 (242 aa).

Residues 48–212 (SCLLQFPEES…NKSKFGRNLV (165 aa)) enclose the uDENN FLCN/SMCR8-type domain.

Required for the nitrogen-regulated transport of amino acid permeases GAP1 and PUT4 from the Golgi to the cell surface. The polypeptide is Protein LST7 (LST7) (Saccharomyces cerevisiae (strain ATCC 204508 / S288c) (Baker's yeast)).